The sequence spans 455 residues: GTPase Der (455 aa).

2 EngA-type G domains span residues 3-167 (FTIA…PEPA) and 184-359 (IRVA…AVWN). Residues 9-16 (GRPNVGKS), 56-60 (DTAGL), 119-122 (NKSE), 190-197 (GRPNAGKS), 237-241 (DTAGL), and 302-305 (NKWD) each bind GTP. The 85-residue stretch at 360–444 (RRVATALLNR…PIRITLREKA (85 aa)) folds into the KH-like domain.

Belongs to the TRAFAC class TrmE-Era-EngA-EngB-Septin-like GTPase superfamily. EngA (Der) GTPase family. As to quaternary structure, associates with the 50S ribosomal subunit.

GTPase that plays an essential role in the late steps of ribosome biogenesis. This Nitrobacter winogradskyi (strain ATCC 25391 / DSM 10237 / CIP 104748 / NCIMB 11846 / Nb-255) protein is GTPase Der.